The sequence spans 493 residues: Probable cytosol aminopeptidase (493 aa).

Residues Lys260 and Asp265 each contribute to the Mn(2+) site. Residue Lys272 is part of the active site. Positions 284, 343, and 345 each coordinate Mn(2+). Residue Arg347 is part of the active site.

It belongs to the peptidase M17 family. The cofactor is Mn(2+).

It is found in the cytoplasm. The enzyme catalyses Release of an N-terminal amino acid, Xaa-|-Yaa-, in which Xaa is preferably Leu, but may be other amino acids including Pro although not Arg or Lys, and Yaa may be Pro. Amino acid amides and methyl esters are also readily hydrolyzed, but rates on arylamides are exceedingly low.. The catalysed reaction is Release of an N-terminal amino acid, preferentially leucine, but not glutamic or aspartic acids.. In terms of biological role, presumably involved in the processing and regular turnover of intracellular proteins. Catalyzes the removal of unsubstituted N-terminal amino acids from various peptides. The sequence is that of Probable cytosol aminopeptidase from Nostoc punctiforme (strain ATCC 29133 / PCC 73102).